We begin with the raw amino-acid sequence, 397 residues long: uncharacterized protein (397 aa).

4 residues coordinate [4Fe-4S] cluster: C47, C53, C56, and C131. S-adenosyl-L-methionine-binding residues include Q235, F262, E282, and D328. The Nucleophile role is filled by C354.

This sequence belongs to the class I-like SAM-binding methyltransferase superfamily. RNA M5U methyltransferase family.

This is an uncharacterized protein from Zymomonas mobilis subsp. mobilis (strain ATCC 31821 / ZM4 / CP4).